The sequence spans 354 residues: Uroporphyrinogen decarboxylase (354 aa).

Residues 27 to 31 (RQAGR), D77, Y154, T209, and H327 each bind substrate.

The protein belongs to the uroporphyrinogen decarboxylase family. Homodimer.

It localises to the cytoplasm. The enzyme catalyses uroporphyrinogen III + 4 H(+) = coproporphyrinogen III + 4 CO2. It functions in the pathway porphyrin-containing compound metabolism; protoporphyrin-IX biosynthesis; coproporphyrinogen-III from 5-aminolevulinate: step 4/4. Catalyzes the decarboxylation of four acetate groups of uroporphyrinogen-III to yield coproporphyrinogen-III. In Salmonella paratyphi A (strain ATCC 9150 / SARB42), this protein is Uroporphyrinogen decarboxylase.